Reading from the N-terminus, the 245-residue chain is Fibroblast growth factor 13 (245 aa).

A disordered region spans residues 1-36 (MAAAIASSLIRQKRQAREREKSNACKCVSSPSKGKT). Residues 1-62 (MAAAIASSLI…GSKKRRRRRP (62 aa)) are mediates targeting to the nucleus. A mediates interaction with sodium channels region spans residues 67–201 (KGIVTKLYSR…AHFLPKPLKV (135 aa)). The interval 157–164 (SMIYRQQQ) is tubulin-binding domain necessary and sufficient for tubulin-binding. Residue S208 is modified to Phosphoserine. Positions 213–245 (TEFSRSGSGTPTKSRSVSGVLNGGKSMSHNEST) are disordered. Residues 215-245 (FSRSGSGTPTKSRSVSGVLNGGKSMSHNEST) show a composition bias toward polar residues.

The protein belongs to the heparin-binding growth factors family. As to quaternary structure, interacts with SCN8A; regulates SCN8A activity. Interacts with SCN1A; may regulate SCN1A activity. Interacts with SCN5A; the interaction is direct and may regulate SNC5A density at membranes and function. May also interact with SCN2A and SCN11A. Interacts with MAPK8IP2; may regulate the MAPK8IP2 scaffolding activity. In terms of processing, may be phosphorylated. In terms of tissue distribution, detected in brain, eye and heart. In brain, the different isoforms display different patterns of expression. Expressed in brain and heart (at protein level). Isoform 3 is highly expressed in cardiac myocytes while isoform 1 is the most abundant in brain.

The protein localises to the cell projection. It localises to the filopodium. Its subcellular location is the growth cone. The protein resides in the dendrite. It is found in the cell membrane. The protein localises to the sarcolemma. It localises to the cytoplasm. Its subcellular location is the nucleus. Functionally, microtubule-binding protein which directly binds tubulin and is involved in both polymerization and stabilization of microtubules. Through its action on microtubules, may participate to the refinement of axons by negatively regulating axonal and leading processes branching. Plays a crucial role in neuron polarization and migration in the cerebral cortex and the hippocampus. Regulates voltage-gated sodium channel transport and function. May also play a role in MAPK signaling. Required for the development of axonal initial segment-targeting inhibitory GABAergic synapses made by chandelier neurons. Its function is as follows. Seems not to be involved in neuroblast polarization and migration but regulates axon branching. The chain is Fibroblast growth factor 13 from Mus musculus (Mouse).